We begin with the raw amino-acid sequence, 330 residues long: D-alanine--D-alanine ligase (330 aa).

The 207-residue stretch at Lys-120–Leu-326 folds into the ATP-grasp domain. Ala-150–Glu-205 is an ATP binding site. Mg(2+)-binding residues include Asp-280, Glu-293, and Asn-295.

Belongs to the D-alanine--D-alanine ligase family. It depends on Mg(2+) as a cofactor. Mn(2+) is required as a cofactor.

It is found in the cytoplasm. It carries out the reaction 2 D-alanine + ATP = D-alanyl-D-alanine + ADP + phosphate + H(+). The protein operates within cell wall biogenesis; peptidoglycan biosynthesis. Functionally, cell wall formation. In Aliivibrio fischeri (strain ATCC 700601 / ES114) (Vibrio fischeri), this protein is D-alanine--D-alanine ligase.